A 173-amino-acid chain; its full sequence is T-cell receptor beta-1 chain C region (173 aa).

Residues 1–146 (EDLRNVTPPK…GVLSATILYE (146 aa)) form a c region region. An intrachain disulfide couples Cys31 to Cys71. N-linked (GlcNAc...) asparagine glycosylation is found at Asn67 and Asn116. The helical transmembrane segment at 146-167 (EILLGKATLYAVLVSTLVVMAM) threads the bilayer. Topologically, residues 168–173 (VKRKNS) are cytoplasmic.

It localises to the membrane. This chain is T-cell receptor beta-1 chain C region, found in Mus musculus (Mouse).